The sequence spans 336 residues: Cell division protein ZipA (336 aa).

Residues 1 to 2 lie on the Periplasmic side of the membrane; it reads ME. Residues 3 to 23 traverse the membrane as a helical segment; sequence LHILFFILAGLLIAVLIGFSL. The Cytoplasmic portion of the chain corresponds to 24 to 336; sequence WSARREKSRI…SRQSYLARVS (313 aa). The tract at residues 57–76 is disordered; sequence SLNPQSYAQTTGQHGETEAD. The span at 59-70 shows a compositional bias: polar residues; it reads NPQSYAQTTGQH.

This sequence belongs to the ZipA family. As to quaternary structure, interacts with FtsZ via their C-terminal domains.

The protein localises to the cell inner membrane. Its function is as follows. Essential cell division protein that stabilizes the FtsZ protofilaments by cross-linking them and that serves as a cytoplasmic membrane anchor for the Z ring. Also required for the recruitment to the septal ring of downstream cell division proteins. The protein is Cell division protein ZipA of Actinobacillus pleuropneumoniae serotype 7 (strain AP76).